The chain runs to 508 residues: Monocarboxylate transporter 9 (508 aa).

Helical transmembrane passes span 13-33 (WVIV…PLAV), 53-73 (WVGS…SLFV), 80-100 (PVTI…SLAP), 102-122 (IYFL…LLYT), 137-157 (GLAL…YAAL), and 164-184 (FYGL…ILAC). The disordered stretch occupies residues 242 to 263 (GDWGRETSLPKNPTGAAHTKEP). A run of 6 helical transmembrane segments spans residues 303-323 (VFSA…PPSL), 341-361 (IPLI…LGIL), 370-390 (LYLY…IPLA), 396-416 (LAIL…FPYV), 431-451 (GILM…VGWF), and 460-480 (IAFY…LLAI).

Belongs to the major facilitator superfamily. Monocarboxylate porter (TC 2.A.1.13) family. In terms of tissue distribution, expressed in the liver and kidneys. In the liver localizes on the sinusoidal membrane of the hepatocytes.

It localises to the cell membrane. It catalyses the reaction creatine(in) = creatine(out). It carries out the reaction (R)-carnitine(in) = (R)-carnitine(out). Its function is as follows. Extracellular pH-and Na(+)-sensitive low-affinity creatine transporter. Also functions as a pH-independent carnitine efflux transporter. The chain is Monocarboxylate transporter 9 (Slc16a9) from Rattus norvegicus (Rat).